Consider the following 485-residue polypeptide: Glutamate--tRNA ligase (485 aa).

The 'HIGH' region signature appears at 11-21 (PSPTGYMHVGN). Zn(2+) is bound by residues Cys108, Cys110, Cys135, and Asp137. Residues 252-256 (KLSKR) carry the 'KMSKS' region motif. Residue Lys255 coordinates ATP.

This sequence belongs to the class-I aminoacyl-tRNA synthetase family. Glutamate--tRNA ligase type 1 subfamily. Monomer. Zn(2+) serves as cofactor.

It is found in the cytoplasm. It catalyses the reaction tRNA(Glu) + L-glutamate + ATP = L-glutamyl-tRNA(Glu) + AMP + diphosphate. Catalyzes the attachment of glutamate to tRNA(Glu) in a two-step reaction: glutamate is first activated by ATP to form Glu-AMP and then transferred to the acceptor end of tRNA(Glu). The chain is Glutamate--tRNA ligase from Clostridium botulinum (strain ATCC 19397 / Type A).